A 382-amino-acid polypeptide reads, in one-letter code: D-galactonate dehydratase (382 aa).

Residue Asp-183 participates in Mg(2+) binding. The active-site Proton donor is His-185. Mg(2+) is bound by residues Glu-209 and Glu-235. His-285 acts as the Proton acceptor in catalysis.

It belongs to the mandelate racemase/muconate lactonizing enzyme family. GalD subfamily. The cofactor is Mg(2+).

The enzyme catalyses D-galactonate = 2-dehydro-3-deoxy-D-galactonate + H2O. Its pathway is carbohydrate acid metabolism; D-galactonate degradation; D-glyceraldehyde 3-phosphate and pyruvate from D-galactonate: step 1/3. Catalyzes the dehydration of D-galactonate to 2-keto-3-deoxy-D-galactonate. This is D-galactonate dehydratase from Escherichia coli (strain UTI89 / UPEC).